We begin with the raw amino-acid sequence, 359 residues long: Phospho-N-acetylmuramoyl-pentapeptide-transferase (359 aa).

10 helical membrane passes run 26 to 46 (TIYG…WVIN), 73 to 93 (TMGG…WADL), 98 to 118 (ILIT…DDYL), 134 to 154 (FLVQ…CPDF), 166 to 186 (FTPD…VGTS), 197 to 217 (GLAI…AYVA), 234 to 254 (CGEI…FLWF), 261 to 281 (VFMG…IAVI), 286 to 306 (ILLL…IIQV), and 338 to 358 (IVRF…TLKI).

It belongs to the glycosyltransferase 4 family. MraY subfamily. The cofactor is Mg(2+).

The protein resides in the cell inner membrane. The catalysed reaction is UDP-N-acetyl-alpha-D-muramoyl-L-alanyl-gamma-D-glutamyl-meso-2,6-diaminopimeloyl-D-alanyl-D-alanine + di-trans,octa-cis-undecaprenyl phosphate = di-trans,octa-cis-undecaprenyl diphospho-N-acetyl-alpha-D-muramoyl-L-alanyl-D-glutamyl-meso-2,6-diaminopimeloyl-D-alanyl-D-alanine + UMP. Its pathway is cell wall biogenesis; peptidoglycan biosynthesis. In terms of biological role, catalyzes the initial step of the lipid cycle reactions in the biosynthesis of the cell wall peptidoglycan: transfers peptidoglycan precursor phospho-MurNAc-pentapeptide from UDP-MurNAc-pentapeptide onto the lipid carrier undecaprenyl phosphate, yielding undecaprenyl-pyrophosphoryl-MurNAc-pentapeptide, known as lipid I. The chain is Phospho-N-acetylmuramoyl-pentapeptide-transferase from Desulforapulum autotrophicum (strain ATCC 43914 / DSM 3382 / VKM B-1955 / HRM2) (Desulfobacterium autotrophicum).